Reading from the N-terminus, the 569-residue chain is Endo-1,4-beta-xylanase 5 (569 aa).

An N-terminal signal peptide occupies residues 1–25; the sequence is MKNINNGFFLCMLLLLWCFVHSGIS. N-linked (GlcNAc...) asparagine glycosylation is found at Asn197, Asn261, and Asn307. Residues 209–500 enclose the GH10 domain; it reads EQTKPSFLLG…NTATGDVIDK (292 aa). Glu332 (proton donor) is an active-site residue. The N-linked (GlcNAc...) asparagine glycan is linked to Asn346. Residue Glu439 is the Nucleophile of the active site. 3 N-linked (GlcNAc...) asparagine glycosylation sites follow: Asn490, Asn536, and Asn544.

It belongs to the glycosyl hydrolase 10 (cellulase F) family.

The catalysed reaction is Endohydrolysis of (1-&gt;4)-beta-D-xylosidic linkages in xylans.. The protein operates within glycan degradation; xylan degradation. Functionally, binds to and hydrolyzes insoluble and soluble xylan substrates. This chain is Endo-1,4-beta-xylanase 5, found in Arabidopsis thaliana (Mouse-ear cress).